Here is a 412-residue protein sequence, read N- to C-terminus: ATP phosphoribosyltransferase regulatory subunit (412 aa).

The protein belongs to the class-II aminoacyl-tRNA synthetase family. HisZ subfamily. In terms of assembly, heteromultimer composed of HisG and HisZ subunits.

The protein resides in the cytoplasm. It functions in the pathway amino-acid biosynthesis; L-histidine biosynthesis; L-histidine from 5-phospho-alpha-D-ribose 1-diphosphate: step 1/9. Functionally, required for the first step of histidine biosynthesis. May allow the feedback regulation of ATP phosphoribosyltransferase activity by histidine. The protein is ATP phosphoribosyltransferase regulatory subunit of Dehalococcoides mccartyi (strain ATCC BAA-2266 / KCTC 15142 / 195) (Dehalococcoides ethenogenes (strain 195)).